The sequence spans 171 residues: ATP synthase subunit b (171 aa).

A helical membrane pass occupies residues 24–44; that stretch reads INLVIVIGVLYWFLKGFLGGI.

The protein belongs to the ATPase B chain family. F-type ATPases have 2 components, F(1) - the catalytic core - and F(0) - the membrane proton channel. F(1) has five subunits: alpha(3), beta(3), gamma(1), delta(1), epsilon(1). F(0) has four main subunits: a(1), b(1), b'(1) and c(10-14). The alpha and beta chains form an alternating ring which encloses part of the gamma chain. F(1) is attached to F(0) by a central stalk formed by the gamma and epsilon chains, while a peripheral stalk is formed by the delta, b and b' chains.

The protein localises to the cellular thylakoid membrane. Functionally, f(1)F(0) ATP synthase produces ATP from ADP in the presence of a proton or sodium gradient. F-type ATPases consist of two structural domains, F(1) containing the extramembraneous catalytic core and F(0) containing the membrane proton channel, linked together by a central stalk and a peripheral stalk. During catalysis, ATP synthesis in the catalytic domain of F(1) is coupled via a rotary mechanism of the central stalk subunits to proton translocation. In terms of biological role, component of the F(0) channel, it forms part of the peripheral stalk, linking F(1) to F(0). This chain is ATP synthase subunit b, found in Synechococcus sp. (strain WH7803).